Reading from the N-terminus, the 773-residue chain is E3 ubiquitin-protein ligase msl-2 (773 aa).

Cysteine 41, cysteine 44, cysteine 59, histidine 61, cysteine 64, cysteine 67, cysteine 78, and cysteine 84 together coordinate Zn(2+). The RING-type zinc finger occupies 41 to 85; sequence CVVCCQLLVDPYSPKGKRCQHNVCRLCLRGKKHLFPSCTQCEGCS. Positions 424–468 form a coiled coil; it reads VQTELQDAESLQKDFEDAKAAAEEAKEKEKDLHAISAELQKEDSD. Residues 460–525 are disordered; sequence AELQKEDSDE…EKVKPPKPKC (66 aa). Residues 520-571 form the CXC MSL2-type domain; sequence PPKPKCRCGISGSSNTLTTCRNSRCPCYKSYNSCAGCHCVCCKNPHKEDYVE. Positions 525, 527, 539, 544, 546, 553, 556, 558, and 561 each coordinate Zn(2+). Residues 571–773 are C-terminal disordered region (CTD); the sequence is ESDEDDDLED…EEIMSGSDDL (203 aa). Positions 572–581 are enriched in acidic residues; that stretch reads SDEDDDLEDF. Positions 572–616 are disordered; it reads SDEDDDLEDFEMPKDVPEPMTQSEEPVVAEPRQEENSMAPPDSSA. A clamp-binding domain (CBD) region spans residues 620-685; it reads LVPLNNLQQS…SLPQYAYIMP (66 aa). Positions 650–708 are pro/Bas region; the sequence is QGSKPLDPVTVGFTIRVQLQHTDGFGSLPQYAYIMPTIDPPNPPAPSLSPPPPPAPDRE. Pro residues predominate over residues 687 to 704; that stretch reads IDPPNPPAPSLSPPPPPA. The interval 687–773 is disordered; that stretch reads IDPPNPPAPS…EEIMSGSDDL (87 aa). Positions 705–714 are enriched in basic and acidic residues; sequence PDREVIEPPA. Positions 715-726 are enriched in basic residues; the sequence is KKFRTSRTRRGR. Over residues 742 to 759 the composition is skewed to polar residues; that stretch reads GSRSNSAAGDRSSATDNA.

It belongs to the MSL2 family. As to quaternary structure, component of the male-specific lethal (MSL) histone acetyltransferase complex, composed of mof, mle, msl-1, msl-2 and msl-3 proteins, as well as roX1 and roX2 non-coding RNAs. When not associated with chromatin, the MSL complex associates with msl-2 mRNAs, possibly to regulate the amount of available MSL complex. Interacts with Clamp; promoting cooperative binding to DNA PionX sites and recruitment of the MSL complex to chromatin. In terms of processing, autoubiquitinated.

Its subcellular location is the nucleus. The protein localises to the chromosome. The enzyme catalyses S-ubiquitinyl-[E2 ubiquitin-conjugating enzyme]-L-cysteine + [acceptor protein]-L-lysine = [E2 ubiquitin-conjugating enzyme]-L-cysteine + N(6)-ubiquitinyl-[acceptor protein]-L-lysine.. The protein operates within protein modification; protein ubiquitination. Functionally, limiting component of the male-specific lethal (MSL) histone acetyltransferase complex, a multiprotein complex essential for elevating transcription of the single X chromosome in the male (X chromosome dosage compensation). The MSL complex specifically associates with the single X chromosome in males and mediates formation of H4K16ac, promoting a two-fold activation of X chromosome. Msl-2 is only produced in males, constituting the limiting component of the MSL complex. Within the MSL complex, msl-2 mediates the selective binding to the X chromosome and recruitment of the MSL complex via two different mechanisms. Recognizes DNA motifs that are enriched on X chromosome, named PionX sites, which are characterized by sequence features and distinct DNA conformation (base roll). Specific recognition of the X chromosome is also mediated by the formation of a gel-like state: msl-2 undergoes liquid-liquid phase separation upon binding to roX1 and roX2 non-coding RNAs, leading to nucleate the MSL complex on the X chromosome. Msl-2 is also required for translation and/or stability of msl-1 in males. Also acts as an E3 ubiquitin ligase: in complex with msl-1, mediates ubiquitination of histone H2B at 'Lys-34' (H2BK34Ub). Also catalyzes ubiquitination of msl-1, msl-3 and mof components of the MSL complex. This Drosophila melanogaster (Fruit fly) protein is E3 ubiquitin-protein ligase msl-2.